The following is a 529-amino-acid chain: MSEQEGNQSEHQSEHVGESEGKLPNETPTTSQSTNASTGTAGKGEKKSSDGDPAAANPATKLTPSMAESLLELNPALRSELAGMDKEKATEALRQMNISDLLTGLSVNPKNQKDMASFKFWQTQPVIRFDDRESESPDGPIKIVELDQVSREPIPLVDGFEWVTLDIDDEADVKEFYELLANHYVEDGSAMFRFNYSPAFLNWALKAPGWKREWHVGVRASKSGKLVASICGVPAEIAVRGKSLKVTEINFLCVHKKLRSKRLTPVLIKEITRRCYLNGIYQAIYTVGIMLPTPVSACRYYHRALDWLKLHEVGFSPLPIGSTKSRQVTRNHLPGHTSTPGLRPMQSKDIDAVQDLLNRYLKRFDLSQIFSRKEVDHLLLHKEKPGAEQIVWSYVAEEPGTHRITDFAAFYSLESSVLQNSKHKNVKAAYLYYYATETAFAEKEKGLKERLLMLINDVLILAKKERFDVMNALTLHDNPLFLEQLKFGAGDGQLHYYLFNYRTAPIAGGVNDKNLPDERKRGGVGVILV.

The span at 1-10 (MSEQEGNQSE) shows a compositional bias: polar residues. The tract at residues 1–65 (MSEQEGNQSE…ANPATKLTPS (65 aa)) is disordered. Positions 11 to 23 (HQSEHVGESEGKL) are enriched in basic and acidic residues. Polar residues predominate over residues 26 to 40 (ETPTTSQSTNASTGT). Tetradecanoyl-CoA-binding positions include 118–121 (FKFW), 252–254 (LCV), and 260–264 (SKRLT). The active-site Proton acceptor; via carboxylate is valine 529.

It belongs to the NMT family. Monomer.

The protein resides in the cytoplasm. The catalysed reaction is N-terminal glycyl-[protein] + tetradecanoyl-CoA = N-tetradecanoylglycyl-[protein] + CoA + H(+). In terms of biological role, adds a myristoyl group to the N-terminal glycine residue of certain cellular proteins. This Ajellomyces capsulatus (Darling's disease fungus) protein is Glycylpeptide N-tetradecanoyltransferase.